Here is an 83-residue protein sequence, read N- to C-terminus: Putative membrane protein insertion efficiency factor (83 aa).

It belongs to the UPF0161 family.

It localises to the cell inner membrane. In terms of biological role, could be involved in insertion of integral membrane proteins into the membrane. The polypeptide is Putative membrane protein insertion efficiency factor (Pelagibacter ubique (strain HTCC1062)).